A 380-amino-acid chain; its full sequence is Polygalacturonase 2 (380 aa).

A signal peptide spans 1–20 (MIAGSKLLMLGLFGALAVHA). Residues 21-38 (LPEPAKAQVTAAPKLEER) constitute a propeptide that is removed on maturation. Residues cysteine 42 and cysteine 60 are joined by a disulfide bond. 2 PbH1 repeats span residues 173–204 (ATDLTLSGITVDNRDGDTDEGGHNTDAFDVGS) and 205–226 (STGITITGATVYNQDDCLAVNS). Catalysis depends on aspartate 219, which acts as the Proton donor. A disulfide bridge links cysteine 221 with cysteine 237. Histidine 241 is a catalytic residue. PbH1 repeat units lie at residues 256–277 (VANVIIENSQIQDSTNGVRIKT), 285–307 (VKNVTYKDITLSGITKYGIVIEQ), and 319–364 (TDGV…SVSG). N-linked (GlcNAc...) asparagine glycosylation occurs at asparagine 287. 2 cysteine pairs are disulfide-bonded: cysteine 347–cysteine 352 and cysteine 371–cysteine 380.

The protein belongs to the glycosyl hydrolase 28 family.

The protein resides in the secreted. It carries out the reaction (1,4-alpha-D-galacturonosyl)n+m + H2O = (1,4-alpha-D-galacturonosyl)n + (1,4-alpha-D-galacturonosyl)m.. This Penicillium olsonii protein is Polygalacturonase 2 (PG2).